Consider the following 253-residue polypeptide: 3-deoxy-manno-octulosonate cytidylyltransferase (253 aa).

The protein belongs to the KdsB family.

It is found in the cytoplasm. It carries out the reaction 3-deoxy-alpha-D-manno-oct-2-ulosonate + CTP = CMP-3-deoxy-beta-D-manno-octulosonate + diphosphate. It functions in the pathway nucleotide-sugar biosynthesis; CMP-3-deoxy-D-manno-octulosonate biosynthesis; CMP-3-deoxy-D-manno-octulosonate from 3-deoxy-D-manno-octulosonate and CTP: step 1/1. It participates in bacterial outer membrane biogenesis; lipopolysaccharide biosynthesis. Activates KDO (a required 8-carbon sugar) for incorporation into bacterial lipopolysaccharide in Gram-negative bacteria. This Neisseria gonorrhoeae (strain ATCC 700825 / FA 1090) protein is 3-deoxy-manno-octulosonate cytidylyltransferase.